The chain runs to 90 residues: Small ribosomal subunit protein uS15c (90 aa).

Belongs to the universal ribosomal protein uS15 family. Part of the 30S ribosomal subunit.

It is found in the plastid. The protein resides in the chloroplast. The polypeptide is Small ribosomal subunit protein uS15c (rps15) (Drimys granadensis).